The primary structure comprises 353 residues: Fe(3+) ions import ATP-binding protein FbpC (353 aa).

Residues 9-239 form the ABC transporter domain; it reads VTFENVTKKF…PASAFIADFM (231 aa). 41 to 48 is an ATP binding site; it reads GPSGCGKT.

It belongs to the ABC transporter superfamily. Fe(3+) ion importer (TC 3.A.1.10) family. As to quaternary structure, the complex is composed of two ATP-binding proteins (FbpC), two transmembrane proteins (FbpB) and a solute-binding protein (FbpA).

The protein resides in the cell inner membrane. The enzyme catalyses Fe(3+)(out) + ATP + H2O = Fe(3+)(in) + ADP + phosphate + H(+). Its function is as follows. Part of the ABC transporter complex FbpABC involved in Fe(3+) ions import. Responsible for energy coupling to the transport system. In Brucella abortus (strain 2308), this protein is Fe(3+) ions import ATP-binding protein FbpC.